The primary structure comprises 235 residues: MTLNSDYLNLLDLMQITNANFPIGTFSHSFGVETYIRKDIVFDGESLIKALLLYMNEQLLHGDLLAIYQIFKLLPKQKINAIWEIDQMINFQGLARETREGQRRIGQQMVKIYNELFNCELLVEYAERIKNKKSYGNPAVAFALLAMHLKIDLKTALYTHLYSTVAALTQNCVRAIPLGQVKGQKIIYQLKHVYFDDIVNKVFTLDFKTDFCKNIPGLEIAQMEHEDTPVRLFMS.

It belongs to the UreF family. UreD, UreF and UreG form a complex that acts as a GTP-hydrolysis-dependent molecular chaperone, activating the urease apoprotein by helping to assemble the nickel containing metallocenter of UreC. The UreE protein probably delivers the nickel.

The protein localises to the cytoplasm. In terms of biological role, required for maturation of urease via the functional incorporation of the urease nickel metallocenter. This is Urease accessory protein UreF from Ureaplasma parvum serovar 3 (strain ATCC 27815 / 27 / NCTC 11736).